Consider the following 269-residue polypeptide: Aquaporin-7 (269 aa).

Topologically, residues 1–20 (MAGSVLENIQSVLQKTWVRE) are cytoplasmic. At Ser-4 the chain carries Phosphoserine. Residues 21-38 (FLAEFLSTYVLMVFGLGS) traverse the membrane as a helical segment. Topologically, residues 39 to 51 (VAHMVLGERLGSY) are extracellular. A helical membrane pass occupies residues 52–69 (LGVNLGFGFGVTMGIHVA). The Cytoplasmic portion of the chain corresponds to 70-73 (GGIS). The discontinuously helical intramembrane region spans 74-87 (GAHMNAAVTFTNCA). Positions 78 to 80 (NAA) match the NPA 1 motif. The Cytoplasmic portion of the chain corresponds to 88–95 (LGRMAWKK). A helical transmembrane segment spans residues 96-116 (FPIYVLGQFLGSFLAAATTYL). Residues 117 to 151 (IFYGAINHYAGGELLVTGPKSTANIFATYLPEHMT) are Extracellular-facing. A helical transmembrane segment spans residues 152–172 (LWRGFVDEVFVTGMLQLCIFA). Over 173 to 184 (ITDKLNSPALQG) the chain is Cytoplasmic. A helical membrane pass occupies residues 185–201 (TEPLMIGILVCVLGVSL). Residues 202 to 205 (GMNT) are Extracellular-facing. The segment at residues 206–219 (GYAINPSRDLPPRF) is an intramembrane region (discontinuously helical). The short motif at 210 to 212 (NPS) is the NPA 2 element. Residues 220-237 (FTFIAGWGKKVFSAGNNW) are Extracellular-facing. The helical transmembrane segment at 238–259 (WWVPVVAPLLGAYLGGIVYLGL) threads the bilayer. Topologically, residues 260–269 (IHAGIPPQGS) are cytoplasmic.

Belongs to the MIP/aquaporin (TC 1.A.8) family. Homotetramer; each monomer provides an independent glycerol/water pore. Two homotetramers on opposing membranes can dimerize, forming a cell-cell junction. Interacts with PLIN1. In terms of processing, phosphorylation by PKA could prevent the interaction with PLIN1. In terms of tissue distribution, detected in heart, kidney and testis.

It is found in the cell membrane. The protein localises to the cytoplasmic vesicle membrane. The protein resides in the lipid droplet. The catalysed reaction is glycerol(in) = glycerol(out). The enzyme catalyses H2O(in) = H2O(out). It catalyses the reaction urea(in) = urea(out). Its activity is regulated as follows. Glycerol transport is regulated by pH, with the porin being permeable to glycerol at pH 7.4 but not at pH 5.5. Water permeability, however, is not influenced by pH. Not inhibited by mercury ions. Functionally, aquaglyceroporins form homotetrameric transmembrane channels, with each monomer independently mediating glycerol and water transport across the plasma membrane along their osmotic gradient. Could also be permeable to urea. Mediates the efflux of glycerol, formed upon triglyceride hydrolysis, to avoid its accumulation in adipocytes and to make it available to other tissues. In the kidney, mediates the reabsorption of glycerol, preventing its loss in urine, again participating to energy homeostasis. In pancreatic beta cells, it also mediates the efflux of glycerol, regulating its intracellular levels. The sequence is that of Aquaporin-7 from Rattus norvegicus (Rat).